The chain runs to 415 residues: Phosphopentomutase (415 aa).

Residues Asp-10, Asp-313, His-318, Asp-354, His-355, and His-366 each contribute to the Mn(2+) site.

It belongs to the phosphopentomutase family. Mn(2+) serves as cofactor.

It localises to the cytoplasm. The catalysed reaction is 2-deoxy-alpha-D-ribose 1-phosphate = 2-deoxy-D-ribose 5-phosphate. The enzyme catalyses alpha-D-ribose 1-phosphate = D-ribose 5-phosphate. The protein operates within carbohydrate degradation; 2-deoxy-D-ribose 1-phosphate degradation; D-glyceraldehyde 3-phosphate and acetaldehyde from 2-deoxy-alpha-D-ribose 1-phosphate: step 1/2. In terms of biological role, isomerase that catalyzes the conversion of deoxy-ribose 1-phosphate (dRib-1-P) and ribose 1-phosphate (Rib-1-P) to deoxy-ribose 5-phosphate (dRib-5-P) and ribose 5-phosphate (Rib-5-P), respectively. The sequence is that of Phosphopentomutase from Psychromonas ingrahamii (strain DSM 17664 / CCUG 51855 / 37).